The following is a 198-amino-acid chain: Cyclin-dependent kinase inhibitor 1B (198 aa).

The segment covering 1–11 (MSNVRVSNGSP) has biased composition (polar residues). The interval 1 to 22 (MSNVRVSNGSPSLERMDARQAE) is disordered. A Phosphoserine; by UHMK1 modification is found at S10. The interaction with CDK2 stretch occupies residues 51-91 (DMEEASQRKWNFDFQNHKPLEGKYEWQEVEKGSLPEFYYRP). Y74 is subject to Phosphotyrosine; by SRC. The interval 87-198 (FYYRPPRPPK…KKPGLRRRQT (112 aa)) is disordered. Y88 carries the phosphotyrosine; by ABL, LYN and SRC modification. Y89 carries the phosphotyrosine modification. Residues 104–113 (QESQDVSGNR) show a composition bias toward polar residues. Positions 126–137 (EDTHLVDQKTDT) are enriched in basic and acidic residues. The Nuclear localization signal motif lies at 153–169 (KRPATDDSSPQNKRANR). At T157 the chain carries Phosphothreonine; by CaMK1, PKB/AKT1 and PIM1. Residue T170 is modified to Phosphothreonine. Positions 175–186 (SDGSPNAGSVEQ) are enriched in polar residues. A Phosphothreonine; by PKB/AKT1, CDK1 and CDK2 modification is found at T187. At T198 the chain carries Phosphothreonine; by CaMK1, PKB/AKT1, RPS6KA1, RPS6KA3 and PIM1.

The protein belongs to the CDI family. As to quaternary structure, forms a ternary complex composed of CCNE1, CDK2 and CDKN1B. Interacts directly with CCNE1; the interaction is inhibited by CDK2-dependent phosphorylation on Thr-187. Interacts with COPS5, subunit of the COP9 signalosome complex; the interaction leads to CDKN1B degradation. Interacts with NUP50; the interaction leads to nuclear import and degradation of phosphorylated CDKN1B. Interacts with CCND1 and SNX6. Interacts (Thr-198-phosphorylated form) with 14-3-3 proteins, binds strongly YWHAQ, weakly YWHAE and YWHAH, but not YWHAB nor YWHAZ; the interaction with YWHAQ results in translocation to the cytoplasm. Interacts with AKT1 and LYN; the interactions lead to cytoplasmic mislocation, phosphorylation of CDKN1B and inhibition of cell cycle arrest. Forms a ternary complex with CCNA2 and CDK2; CDKN1B inhibits the kinase activity of CDK2 through conformational rearrangements. Interacts (unphosphorylated form) with CDK2. Forms a complex with CDK2 and SPDYA, but does not directly interact with SPDYA. Forms a ternary complex composed of cyclin D, CDK4 and CDKN1B. Interacts (phosphorylated on Tyr-88 and Tyr-89) with CDK4; the interaction is required for cyclin D and CDK4 complex assembly, induces nuclear translocation and activates the CDK4 kinase activity. Interacts with GRB2. Interacts with PIM1. Identified in a complex with SKP1, SKP2 and CKS1B. Interacts with UHMK1; the interaction leads to cytoplasmic mislocation, phosphorylation of CDKN1B and inhibition of cell cycle arrest. Also interacts with CDK1. Dephosphorylated on Thr-187 by PPM1H, leading to CDKN1B stability. Phosphorylated; phosphorylation occurs on serine, threonine and tyrosine residues. Phosphorylation on Ser-10 is the major site of phosphorylation in resting cells, takes place at the G(0)-G(1) phase and leads to protein stability. Phosphorylation on other sites is greatly enhanced by mitogens, growth factors, cMYC and in certain cancer cell lines. The phosphorylated form found in the cytoplasm is inactivate. Phosphorylation on Thr-198 is required for interaction with 14-3-3 proteins. Phosphorylation on Thr-187, by CDK1 and CDK2 leads to protein ubiquitination and proteasomal degradation. Tyrosine phosphorylation promotes this process. Phosphorylation by PKB/AKT1 can be suppressed by LY294002, an inhibitor of the catalytic subunit of PI3K. Phosphorylation on Tyr-88 and Tyr-89 has no effect on binding CDK2, but is required for binding CDK4. Dephosphorylated on tyrosine residues by G-CSF. Dephosphorylated on Thr-187 by PPM1H, leading to CDKN1B stability. In terms of processing, ubiquitinated; in the cytoplasm by the KPC complex (composed of RNF123/KPC1 and UBAC1/KPC2) and, in the nucleus, by SCF(SKP2). The latter requires prior phosphorylation on Thr-187. Ubiquitinated; by a TRIM21-containing SCF(SKP2)-like complex; leads to its degradation. Post-translationally, subject to degradation in the lysosome. Interaction with SNX6 promotes lysosomal degradation.

The protein localises to the nucleus. It is found in the cytoplasm. It localises to the endosome. Functionally, important regulator of cell cycle progression. Inhibits the kinase activity of CDK2 bound to cyclin A, but has little inhibitory activity on CDK2 bound to SPDYA. Involved in G1 arrest. Potent inhibitor of cyclin E- and cyclin A-CDK2 complexes. Forms a complex with cyclin type D-CDK4 complexes and is involved in the assembly, stability, and modulation of CCND1-CDK4 complex activation. Acts either as an inhibitor or an activator of cyclin type D-CDK4 complexes depending on its phosphorylation state and/or stoichometry. This chain is Cyclin-dependent kinase inhibitor 1B (CDKN1B), found in Felis catus (Cat).